A 242-amino-acid chain; its full sequence is Hairy and enhancer of split-related protein HELT (242 aa).

The region spanning 10–65 (RTPVSHKVIEKRRRDRINRCLNELGKTVPMALAKQSSGKLEKAEILEMTVQYLRAL) is the bHLH domain. At Lys48 the chain carries N6-acetyllysine. Positions 87–122 (FHYGYHECMKNLVHYLTTVERMETKDTKYARILAFL) constitute an Orange domain.

The protein belongs to the HEY family. In terms of assembly, self-associates. Interacts with HES5 and HEY2.

Its subcellular location is the nucleus. Functionally, transcriptional repressor which binds preferentially to the canonical E box sequence 5'-CACGCG-3'. The polypeptide is Hairy and enhancer of split-related protein HELT (HELT) (Homo sapiens (Human)).